The following is a 905-amino-acid chain: Probable coatomer subunit gamma (905 aa).

5 HEAT repeats span residues 265–302 (TQFR…NISD), 303–340 (DDLQ…TRPH), 374–412 (DESV…KFPR), 414–450 (QDSM…YIPE), and 525–563 (KFVQ…RDAF). Residue S604 is modified to Phosphoserine.

Belongs to the COPG family. In terms of assembly, oligomeric complex that consists of at least the alpha, beta, beta', gamma, delta, epsilon and zeta subunits.

Its subcellular location is the cytoplasm. It localises to the golgi apparatus membrane. The protein resides in the cytoplasmic vesicle. The protein localises to the COPI-coated vesicle membrane. Functionally, the coatomer is a cytosolic protein complex that binds to dilysine motifs and reversibly associates with Golgi non-clathrin-coated vesicles, which further mediate biosynthetic protein transport from the ER, via the Golgi up to the trans Golgi network. Coatomer complex is required for budding from Golgi membranes, and is essential for the retrograde Golgi-to-ER transport of dilysine-tagged proteins. This is Probable coatomer subunit gamma (sec21) from Schizosaccharomyces pombe (strain 972 / ATCC 24843) (Fission yeast).